The primary structure comprises 330 residues: Nitrilase 3 (330 aa).

The CN hydrolase domain occupies 4–273 (VKAAAVQISP…EGEVIVDLDF (270 aa)). Glu44 serves as the catalytic Proton acceptor. Lys128 serves as the catalytic Proton donor. Residue Cys162 is the Nucleophile of the active site. The interval 310 to 330 (RAAHPVSGAEQGPEDLRTPAA) is disordered.

It belongs to the carbon-nitrogen hydrolase superfamily. Nitrilase family.

The enzyme catalyses a nitrile + 2 H2O = a carboxylate + NH4(+). Functionally, nitrilases catalyze the mild hydrolytic conversion of organonitriles directly to the corresponding carboxylic acids. This is Nitrilase 3 from Unknown prokaryotic organism.